A 314-amino-acid polypeptide reads, in one-letter code: Homoserine O-acetyltransferase (314 aa).

Cys-142 serves as the catalytic Acyl-thioester intermediate. Positions 163 and 192 each coordinate substrate. His-235 (proton acceptor) is an active-site residue. Residue Glu-237 is part of the active site. Residue Arg-249 coordinates substrate.

Belongs to the MetA family.

The protein resides in the cytoplasm. The catalysed reaction is L-homoserine + acetyl-CoA = O-acetyl-L-homoserine + CoA. The protein operates within amino-acid biosynthesis; L-methionine biosynthesis via de novo pathway; O-acetyl-L-homoserine from L-homoserine: step 1/1. In terms of biological role, transfers an acetyl group from acetyl-CoA to L-homoserine, forming acetyl-L-homoserine. This chain is Homoserine O-acetyltransferase, found in Streptococcus pneumoniae (strain JJA).